We begin with the raw amino-acid sequence, 138 residues long: MFKFVMVFAVLGVAAAGVAHVPHPQVSHPVGRSEDVHAEVKSEHSDVRADGFDADLLVSNSIQQASSGDVHGNIHGSFSWISPEGEHVEIKYVADENGYQPVGAVLPTPPPIPEAIARAVAWLEAHPQAPEPVHHSHH.

A signal peptide spans 1–16 (MFKFVMVFAVLGVAAA). Positions 49–110 (ADGFDADLLV…PVGAVLPTPP (62 aa)) constitute a Chitin-binding type R&amp;R domain.

Component of the larval cuticle. In Drosophila miranda (Fruit fly), this protein is Larval cuticle protein 1 (Lcp1).